The following is a 291-amino-acid chain: UDP-N-acetylenolpyruvoylglucosamine reductase (291 aa).

Residues 19–186 (GIGGPAEWIA…VSARLKLASG (168 aa)) enclose the FAD-binding PCMH-type domain. Arg165 is an active-site residue. The active-site Proton donor is the Ser215. Glu285 is a catalytic residue.

The protein belongs to the MurB family. FAD is required as a cofactor.

The protein resides in the cytoplasm. It catalyses the reaction UDP-N-acetyl-alpha-D-muramate + NADP(+) = UDP-N-acetyl-3-O-(1-carboxyvinyl)-alpha-D-glucosamine + NADPH + H(+). It participates in cell wall biogenesis; peptidoglycan biosynthesis. Cell wall formation. The polypeptide is UDP-N-acetylenolpyruvoylglucosamine reductase (Prochlorococcus marinus (strain NATL2A)).